Consider the following 244-residue polypeptide: Type III pantothenate kinase (244 aa).

6 to 13 (DVGNTRIK) is an ATP binding site. Residues Y87 and 94 to 97 (GIDR) contribute to the substrate site. D96 functions as the Proton acceptor in the catalytic mechanism. K(+) is bound at residue D117. Residue T120 coordinates ATP. Substrate is bound at residue T172.

It belongs to the type III pantothenate kinase family. In terms of assembly, homodimer. The cofactor is NH4(+). Requires K(+) as cofactor.

The protein resides in the cytoplasm. The catalysed reaction is (R)-pantothenate + ATP = (R)-4'-phosphopantothenate + ADP + H(+). The protein operates within cofactor biosynthesis; coenzyme A biosynthesis; CoA from (R)-pantothenate: step 1/5. In terms of biological role, catalyzes the phosphorylation of pantothenate (Pan), the first step in CoA biosynthesis. In Flavobacterium johnsoniae (strain ATCC 17061 / DSM 2064 / JCM 8514 / BCRC 14874 / CCUG 350202 / NBRC 14942 / NCIMB 11054 / UW101) (Cytophaga johnsonae), this protein is Type III pantothenate kinase.